We begin with the raw amino-acid sequence, 664 residues long: Peroxisomal acyl-coenzyme A oxidase 1 (664 aa).

Residues tyrosine 135, glutamine 137, threonine 138, serine 144, glycine 177, arginine 310, glutamine 330, arginine 333, glycine 401, and threonine 422 each contribute to the FAD site. The Proton acceptor role is filled by glutamate 424. Aspartate 426 is an FAD binding site. A disulfide bond links cysteine 467 and cysteine 576. The Microbody targeting signal motif lies at 662–664; the sequence is ARL.

This sequence belongs to the acyl-CoA oxidase family. Homodimer. FAD is required as a cofactor. As to expression, expressed mainly in flowers and young seedlings. Lower expression in roots, leaves and bracts.

The protein resides in the peroxisome. The catalysed reaction is a 2,3-saturated acyl-CoA + O2 = a (2E)-enoyl-CoA + H2O2. Its function is as follows. Catalyzes the desaturation of both long- and medium-chain acyl-CoAs to 2-trans-enoyl-CoAs. Most active with C14-CoA. Activity on long-chain mono-unsaturated substrates is 40% higher than with the corresponding saturated substrates. Seems to be an important factor in the general metabolism of root tips. May be involved in the biosynthesis of jasmonic acid. This chain is Peroxisomal acyl-coenzyme A oxidase 1, found in Arabidopsis thaliana (Mouse-ear cress).